Consider the following 364-residue polypeptide: Protein leg1b (364 aa).

The signal sequence occupies residues 1 to 22; it reads MSEMGFLRSVAAVLLLAVFSHA. Asparagine 70 carries N-linked (GlcNAc...) asparagine glycosylation.

It belongs to the LEG1 family. Detected in all tissues tested, with the highest levels in serum (at protein level). At mRNA level, only expressed in liver.

It is found in the secreted. Its function is as follows. Involved in early development of liver, exocrine pancreas and intestine, probably through cell cycle regulation. In liver, its function is partially redundant with leg1a function. In Danio rerio (Zebrafish), this protein is Protein leg1b.